A 436-amino-acid polypeptide reads, in one-letter code: MEINVDIQPDCTATLKASIPAETTAARRASIVDSYAAKAKLPGFRPGKTPKSIIEKRFKKEMEEELLDTLFETACSTALEENPKLKVLSFGKPEQSLDDQGNYTATSTMTVVPEFELPEYKGIEVKVPSSEVTEADVEEALNSLAEQIAEFTPVDRAAQKDDVAIIDFKTTLDGKPVAEAVGKPVGFLEGRDGQWMKVEDDQFLPGFASALEGLNAGDSKDITVTIPDTFPITELRGKELVFHATVKEVREKQLPAMDDAFAEKVLPGKNLEELKTALKENLAQRKAMQIDEAKADQITEKLADMLDFNLPEAVVEREVYGILQQKMQQAMYSGNAPADMDKFVEEAREEAKQEAKRNLKVFFMLQEVAQVEKIAVTEMELYNEVARQARQQKKNLKSYIRELQREGRVHGIRMSLLTAKVLDFLTKEAKVTVDEQ.

The PPIase FKBP-type domain occupies 161-255; that stretch reads DDVAIIDFKT…VKEVREKQLP (95 aa).

It belongs to the FKBP-type PPIase family. Tig subfamily.

It localises to the cytoplasm. The catalysed reaction is [protein]-peptidylproline (omega=180) = [protein]-peptidylproline (omega=0). In terms of biological role, involved in protein export. Acts as a chaperone by maintaining the newly synthesized protein in an open conformation. Functions as a peptidyl-prolyl cis-trans isomerase. The polypeptide is Trigger factor (Akkermansia muciniphila (strain ATCC BAA-835 / DSM 22959 / JCM 33894 / BCRC 81048 / CCUG 64013 / CIP 107961 / Muc)).